A 420-amino-acid polypeptide reads, in one-letter code: Serine--tRNA ligase (420 aa).

227–229 (TSE) is an L-serine binding site. ATP is bound by residues 258-260 (RRE) and Val274. Residue Glu281 coordinates L-serine. 345 to 348 (EVTS) lines the ATP pocket. Position 379 (Thr379) interacts with L-serine.

It belongs to the class-II aminoacyl-tRNA synthetase family. Type-1 seryl-tRNA synthetase subfamily. Homodimer. The tRNA molecule binds across the dimer.

It is found in the cytoplasm. The enzyme catalyses tRNA(Ser) + L-serine + ATP = L-seryl-tRNA(Ser) + AMP + diphosphate + H(+). The catalysed reaction is tRNA(Sec) + L-serine + ATP = L-seryl-tRNA(Sec) + AMP + diphosphate + H(+). It participates in aminoacyl-tRNA biosynthesis; selenocysteinyl-tRNA(Sec) biosynthesis; L-seryl-tRNA(Sec) from L-serine and tRNA(Sec): step 1/1. Functionally, catalyzes the attachment of serine to tRNA(Ser). Is also able to aminoacylate tRNA(Sec) with serine, to form the misacylated tRNA L-seryl-tRNA(Sec), which will be further converted into selenocysteinyl-tRNA(Sec). This Acidothermus cellulolyticus (strain ATCC 43068 / DSM 8971 / 11B) protein is Serine--tRNA ligase.